A 311-amino-acid polypeptide reads, in one-letter code: Methionyl-tRNA formyltransferase (311 aa).

Serine 112–proline 115 contributes to the (6S)-5,6,7,8-tetrahydrofolate binding site.

Belongs to the Fmt family.

The catalysed reaction is L-methionyl-tRNA(fMet) + (6R)-10-formyltetrahydrofolate = N-formyl-L-methionyl-tRNA(fMet) + (6S)-5,6,7,8-tetrahydrofolate + H(+). Functionally, attaches a formyl group to the free amino group of methionyl-tRNA(fMet). The formyl group appears to play a dual role in the initiator identity of N-formylmethionyl-tRNA by promoting its recognition by IF2 and preventing the misappropriation of this tRNA by the elongation apparatus. This chain is Methionyl-tRNA formyltransferase, found in Rhizobium etli (strain ATCC 51251 / DSM 11541 / JCM 21823 / NBRC 15573 / CFN 42).